A 103-amino-acid polypeptide reads, in one-letter code: Large ribosomal subunit protein bL21 (103 aa).

The protein belongs to the bacterial ribosomal protein bL21 family. Part of the 50S ribosomal subunit. Contacts protein L20.

This protein binds to 23S rRNA in the presence of protein L20. The chain is Large ribosomal subunit protein bL21 from Azoarcus sp. (strain BH72).